The following is an 80-amino-acid chain: Nuclear protein 1 (80 aa).

2 disordered regions span residues 1–21 (MATL…EDED) and 38–80 (VGGG…KAWR). Basic and acidic residues predominate over residues 61–80 (GHERKLLTKFQNSERKKAWR). Residues 64-80 (RKLLTKFQNSERKKAWR) carry the Nuclear localization signal motif.

Belongs to the NUPR family. In terms of assembly, monomer. Directly interacts with MSL1 and binds MORF4L1, two components of histone acetyltransferase complex; the interaction with MORF4L1 may be mediated by MSL1. Interacts with EP300; this interaction enhances the effect of EP300 on PAX2 transcription factor activity. Interacts with PAXIP1; this interaction prevents PAXIP1 inhibition of PAX2 transcription factor activity. Interacts with COPS5; this interaction allows COPS5-dependent CDKN1B nuclear to cytoplasm translocation. Interacts with RNF2. Interacts with FOXO3; this interaction represses FOXO3 transactivation. Interacts with PTMA; regulates apoptotic process. Interacts with MYOD1, EP300 and DDX5; this interaction coordinates the association of anti-proliferative and pro-myogenic proteins at the myogenin promoter. Interacts with TP53; interaction is stress-dependent. Forms a complex with EP300 and TP53; this complex binds CDKN1A promoter leading to transcriptional induction of CDKN1A. Post-translationally, phosphorylated. Phosphorylation promotes DNA-binding activity. In terms of processing, acetylated. As to expression, highly expressed in pancreas and both ovaries and testes.

The protein resides in the nucleus. The protein localises to the cytoplasm. Its subcellular location is the perinuclear region. In terms of biological role, transcription regulator that converts stress signals into a program of gene expression that empowers cells with resistance to the stress induced by a change in their microenvironment. Thereby participates in the regulation of many processes namely cell-cycle, apoptosis, autophagy and DNA repair responses. Controls cell cycle progression and protects cells from genotoxic stress induced by doxorubicin through the complex formation with TP53 and EP300 that binds CDKN1A promoter leading to transcriptional induction of CDKN1A. Protects pancreatic cancer cells from stress-induced cell death by binding the RELB promoter and activating its transcription, leading to IER3 transactivation. Negatively regulates apoptosis through interaction with PTMA. Inhibits autophagy-induced apoptosis in cardiac cells through FOXO3 interaction, inducing cytoplasmic translocation of FOXO3 thereby preventing the FOXO3 association with the pro-autophagic BNIP3 promoter. Inhibits cell growth and facilitates programmed cell death by apoptosis after adriamycin-induced DNA damage through transactivation of TP53. Regulates methamphetamine-induced apoptosis and autophagy through DDIT3-mediated endoplasmic reticulum stress pathway. Participates in DNA repair following gamma-irradiation by facilitating DNA access of the transcription machinery through interaction with MSL1 leading to inhibition of histone H4' Lys-16' acetylation (H4K16ac). Coactivator of PAX2 transcription factor activity, both by recruiting the EP300 cofactor to increase PAX2 transcription factor activity and by binding PAXIP1 to suppress PAXIP1-induced inhibition on PAX2. Positively regulates cell cycle progression through interaction with COPS5 inducing cytoplasmic translocation of CDKN1B leading to the CDKN1B degradation. Coordinates, through its interaction with EP300, the assiociation of MYOD1, EP300 and DDX5 to the MYOG promoter, leading to inhibition of cell-cycle progression and myogenic differentiation promotion. Negatively regulates beta cell proliferation via inhibition of cell-cycle regulatory genes expression through the suppression of their promoter activities. Also required for LHB expression and ovarian maturation. Exacerbates CNS inflammation and demyelination upon cuprizone treatment. The chain is Nuclear protein 1 from Mus musculus (Mouse).